The sequence spans 357 residues: DNA primase small subunit PriS (357 aa).

Residues Asp105, Asp107, and Asp259 contribute to the active site.

Belongs to the eukaryotic-type primase small subunit family. Heterodimer of a small subunit (PriS) and a large subunit (PriL). Requires Mg(2+) as cofactor. Mn(2+) serves as cofactor.

In terms of biological role, catalytic subunit of DNA primase, an RNA polymerase that catalyzes the synthesis of short RNA molecules used as primers for DNA polymerase during DNA replication. The small subunit contains the primase catalytic core and has DNA synthesis activity on its own. Binding to the large subunit stabilizes and modulates the activity, increasing the rate of DNA synthesis while decreasing the length of the DNA fragments, and conferring RNA synthesis capability. The DNA polymerase activity may enable DNA primase to also catalyze primer extension after primer synthesis. May also play a role in DNA repair. In Methanococcus maripaludis (strain DSM 14266 / JCM 13030 / NBRC 101832 / S2 / LL), this protein is DNA primase small subunit PriS.